Here is a 218-residue protein sequence, read N- to C-terminus: Ornithine decarboxylase antizyme 2 (218 aa).

This sequence belongs to the ODC antizyme family. As to quaternary structure, interacts with ODC1 and thereby sterically blocks ODC homodimerization. Expressed ubiquitously in 24 hours embryos, with highest levels in telencephalon, lens, retina, cerebellum and hindbrain primordia.

Ornithine decarboxylase (ODC) antizyme protein that negatively regulates ODC activity and intracellular polyamine biosynthesis and uptake in response to increased intracellular polyamine levels. Binds to ODC monomers, inhibiting the assembly of the functional ODC homodimers. Does not target the ODC monomers for degradation, which allows a protein synthesis-independent restoration of ODC activity. This Danio rerio (Zebrafish) protein is Ornithine decarboxylase antizyme 2 (oaz1b).